The sequence spans 674 residues: MLPQTALLLLMSLNLVHGVFYTERYQTPTGIKGPPSNTKTQFFIPYAIKGKGVSLRGEQGIPGPPGPAGPRGHPGPSGPPGKPGTGSPGPQGQPGLPGPPGPSATGKPGLPGLPGKQGERGLNGPKGDIGPAGLPGPRGPPGPPGIPGPAGISVPGKPGPQGPTGEPGPRGFPGEKGTSGVPGLNGQKGEMGHCTPCRPGERGLPGPQGPTGPPGPPGVGKRGENGLPGQPGLKGDQGVPGERGAAGPSGPQGPPGEQGPEGIGKPGAPGIPGQPGIPGMKGQPGAPGTAGLPGAPGFGKPGLPGLKGQRGPVGLPGSPGAKGEQGPAGHPGEAGLPGPSGNMGPQGPKGIPGNPGLPGPKGEMGPVGPAGNPGAKGERGSSGLDGKPGYPGEPGLNGPKGNPGLPGPKGDPGIAGSPGLPGPVGPAGAKGVPGHNGEAGPRGVPGIPGTRGPIGPPGIPGFPGSKGDVGTPGPPGPAGIAVKGLNGPTGPPGPPGPRGNAGEPGLPGPPGPPGPPGQVALPEDFVKAGQRPFVSANQGVTGMPVSAFTVILSKAYPAIGTPIPFDKILYNKQQHYDPRTGIFTCKIPGIYYFSYHIHVKGTHAWVGLYKNGTPVMYTYDEYIKGYLDQASGSAVIDLTENDQVWLQLPNAGSNGLYSPEYVHSSFSGFLVAPM.

The N-terminal stretch at 1 to 18 (MLPQTALLLLMSLNLVHG) is a signal peptide. Positions 19–56 (VFYTERYQTPTGIKGPPSNTKTQFFIPYAIKGKGVSLR) are nonhelical region (NC2). The interval 54 to 521 (SLRGEQGIPG…PPGPPGQVAL (468 aa)) is disordered. A triple-helical region region spans residues 57-519 (GEQGIPGPPG…PGPPGPPGQV (463 aa)). Residues 106-116 (GKPGLPGLPGK) show a composition bias toward low complexity. A compositionally biased stretch (pro residues) spans 137–147 (PRGPPGPPGIP). Cysteine 194 and cysteine 197 are oxidised to a cystine. The span at 207-217 (PQGPTGPPGPP) shows a compositional bias: pro residues. 4 stretches are compositionally biased toward low complexity: residues 277-293 (IPGMKGQPGAPGTAGLP), 303-312 (LPGLKGQRGP), 393-403 (EPGLNGPKGNP), and 441-453 (PRGVPGIPGTRGP). A 4-hydroxyproline mark is found at proline 460 and proline 463. The segment covering 506–516 (LPGPPGPPGPP) has biased composition (pro residues). The segment at 520–674 (ALPEDFVKAG…SFSGFLVAPM (155 aa)) is nonhelical region (NC1). The region spanning 541-674 (TGMPVSAFTV…SFSGFLVAPM (134 aa)) is the C1q domain. Ca(2+) contacts are provided by aspartate 620, glutamate 621, leucine 627, and aspartate 628.

As to quaternary structure, homotrimer. Hydroxylation on proline residues within the sequence motif, GXPG, is most likely to be 4-hydroxy as this fits the requirement for 4-hydroxylation in vertebrates.

It is found in the secreted. The protein localises to the extracellular space. It localises to the extracellular matrix. Its function is as follows. Type X collagen is a product of hypertrophic chondrocytes and has been localized to presumptive mineralization zones of hyaline cartilage. In Bos taurus (Bovine), this protein is Collagen alpha-1(X) chain (COL10A1).